The chain runs to 58 residues: ATP synthase F(0) complex subunit k, mitochondrial (58 aa).

2 positions are modified to N6-acetyllysine: K16 and K17. A helical membrane pass occupies residues T23 to F45.

In terms of assembly, component of the ATP synthase complex composed at least of ATP5F1A/subunit alpha, ATP5F1B/subunit beta, ATP5MC1/subunit c (homooctomer), MT-ATP6/subunit a, MT-ATP8/subunit 8, ATP5ME/subunit e, ATP5MF/subunit f, ATP5MG/subunit g, ATP5MK/subunit k, ATP5MJ/subunit j, ATP5F1C/subunit gamma, ATP5F1D/subunit delta, ATP5F1E/subunit epsilon, ATP5PF/subunit F6, ATP5PB/subunit b, ATP5PD/subunit d, ATP5PO/subunit OSCP. ATP synthase complex consists of a soluble F(1) head domain (subunits alpha(3) and beta(3)) - the catalytic core - and a membrane F(0) domain - the membrane proton channel (subunits c, a, 8, e, f, g, k and j). These two domains are linked by a central stalk (subunits gamma, delta, and epsilon) rotating inside the F1 region and a stationary peripheral stalk (subunits F6, b, d, and OSCP). The ATP synthase complex/complex V exists as a monomeric and a dimeric supercomplex that helps shape mitochondrial cristae to optimize proton flow. Ubiquitous. Highly expressed in skeletal and cardiac muscle. Moderately expressed in brain, thymus, stomach and testis. Lowest expression levels were detected in lung, liver, kidney, adrenal gland, spleen, small intestine and adipose tissue. In streptozotocin-induced diabetes, the insulin-sensitive tissues skeletal and cardiac muscle were down-regulated.

The protein resides in the mitochondrion membrane. Functionally, subunit k, of the mitochondrial membrane ATP synthase complex (F(1)F(0) ATP synthase or Complex V) that produces ATP from ADP in the presence of a proton gradient across the membrane which is generated by electron transport complexes of the respiratory chain. ATP synthase complex consist of a soluble F(1) head domain - the catalytic core - and a membrane F(1) domain - the membrane proton channel. These two domains are linked by a central stalk rotating inside the F(1) region and a stationary peripheral stalk. During catalysis, ATP synthesis in the catalytic domain of F(1) is coupled via a rotary mechanism of the central stalk subunits to proton translocation. In vivo, can only synthesize ATP although its ATP hydrolase activity can be activated artificially in vitro. Part of the complex F(0) domain. Required for dimerization of the ATP synthase complex and as such regulates ATP synthesis in the mitochondria. The polypeptide is ATP synthase F(0) complex subunit k, mitochondrial (Atp5mk) (Rattus norvegicus (Rat)).